The primary structure comprises 416 residues: Multifunctional CCA protein (416 aa).

Residues Gly-8 and Arg-11 each coordinate ATP. Residues Gly-8 and Arg-11 each coordinate CTP. Residues Asp-21 and Asp-23 each coordinate Mg(2+). ATP-binding residues include Arg-91, Arg-137, and Arg-140. Residues Arg-91, Arg-137, and Arg-140 each contribute to the CTP site. The region spanning 226-327 (TGVHIMLVID…VNLLERCDAF (102 aa)) is the HD domain.

The protein belongs to the tRNA nucleotidyltransferase/poly(A) polymerase family. Bacterial CCA-adding enzyme type 1 subfamily. In terms of assembly, monomer. Can also form homodimers and oligomers. Requires Mg(2+) as cofactor. The cofactor is Ni(2+).

It carries out the reaction a tRNA precursor + 2 CTP + ATP = a tRNA with a 3' CCA end + 3 diphosphate. The catalysed reaction is a tRNA with a 3' CCA end + 2 CTP + ATP = a tRNA with a 3' CCACCA end + 3 diphosphate. Its function is as follows. Catalyzes the addition and repair of the essential 3'-terminal CCA sequence in tRNAs without using a nucleic acid template. Adds these three nucleotides in the order of C, C, and A to the tRNA nucleotide-73, using CTP and ATP as substrates and producing inorganic pyrophosphate. tRNA 3'-terminal CCA addition is required both for tRNA processing and repair. Also involved in tRNA surveillance by mediating tandem CCA addition to generate a CCACCA at the 3' terminus of unstable tRNAs. While stable tRNAs receive only 3'-terminal CCA, unstable tRNAs are marked with CCACCA and rapidly degraded. This Janthinobacterium sp. (strain Marseille) (Minibacterium massiliensis) protein is Multifunctional CCA protein.